We begin with the raw amino-acid sequence, 102 residues long: Large ribosomal subunit protein uL24 (102 aa).

Belongs to the universal ribosomal protein uL24 family. As to quaternary structure, part of the 50S ribosomal subunit.

In terms of biological role, one of two assembly initiator proteins, it binds directly to the 5'-end of the 23S rRNA, where it nucleates assembly of the 50S subunit. Functionally, one of the proteins that surrounds the polypeptide exit tunnel on the outside of the subunit. The protein is Large ribosomal subunit protein uL24 of Cupriavidus metallidurans (strain ATCC 43123 / DSM 2839 / NBRC 102507 / CH34) (Ralstonia metallidurans).